Reading from the N-terminus, the 760-residue chain is NAD(P)H-quinone oxidoreductase subunit 5, chloroplastic (760 aa).

Transmembrane regions (helical) follow at residues 9-29 (WIIS…LLLF), 39-59 (IWAF…IDLF), 89-109 (IDPL…LVLV), 125-145 (FVYM…SNLI), 147-167 (IYIF…FWFT), 185-205 (GDFG…SFEF), 221-241 (NEVH…GAIA), 260-280 (TPIS…FLVA), 282-302 (LLPL…IGII), 329-349 (LGYT…FHLI), 356-376 (ALLF…VGYS), 398-418 (IAFL…CFWS), 429-449 (YSPI…FYMF), 556-576 (ILFP…IGIP), 620-640 (FSVS…KPIY), and 734-754 (FYLL…SSIF).

The protein belongs to the complex I subunit 5 family. As to quaternary structure, NDH is composed of at least 16 different subunits, 5 of which are encoded in the nucleus.

The protein localises to the plastid. It is found in the chloroplast thylakoid membrane. The catalysed reaction is a plastoquinone + NADH + (n+1) H(+)(in) = a plastoquinol + NAD(+) + n H(+)(out). It catalyses the reaction a plastoquinone + NADPH + (n+1) H(+)(in) = a plastoquinol + NADP(+) + n H(+)(out). NDH shuttles electrons from NAD(P)H:plastoquinone, via FMN and iron-sulfur (Fe-S) centers, to quinones in the photosynthetic chain and possibly in a chloroplast respiratory chain. The immediate electron acceptor for the enzyme in this species is believed to be plastoquinone. Couples the redox reaction to proton translocation, and thus conserves the redox energy in a proton gradient. This chain is NAD(P)H-quinone oxidoreductase subunit 5, chloroplastic (ndhF), found in Populus trichocarpa (Western balsam poplar).